We begin with the raw amino-acid sequence, 489 residues long: Rhamnulokinase (489 aa).

ATP is bound at residue 13–17 (ASSGR). An intrachain disulfide couples cysteine 68 to cysteine 222. Substrate contacts are provided by residues glycine 83 and 236 to 238 (HDT). Aspartate 237 serves as the catalytic Proton acceptor. Position 259 (threonine 259) interacts with ATP. Asparagine 296 is a binding site for substrate. ATP is bound at residue glutamine 304. An intrachain disulfide couples cysteine 353 to cysteine 370. Glycine 402 lines the ATP pocket. A disulfide bridge links cysteine 413 with cysteine 417.

Belongs to the rhamnulokinase family. The cofactor is Mg(2+).

It carries out the reaction L-rhamnulose + ATP = L-rhamnulose 1-phosphate + ADP + H(+). Its pathway is carbohydrate degradation; L-rhamnose degradation; glycerone phosphate from L-rhamnose: step 2/3. Functionally, involved in the catabolism of L-rhamnose (6-deoxy-L-mannose). Catalyzes the transfer of the gamma-phosphate group from ATP to the 1-hydroxyl group of L-rhamnulose to yield L-rhamnulose 1-phosphate. The polypeptide is Rhamnulokinase (Salmonella paratyphi A (strain AKU_12601)).